Here is a 265-residue protein sequence, read N- to C-terminus: MGQKVNPYGFRLGITTDHVSRWFSDSTKKGQRYSDYVAEDVRIRTMLKTSLDRAGVARIEIERTRDRVRVDIYTARPGIVIGRRGVEAERIRADLEKLTGKQIQLNILEVKNPEAEAQLVAQGIAEQLAGRVAFRRAMRKGLQGAQRAGAKGVRIQVSGRLGGAEMSRSEFYREGRVPLHTLRANIDYGFYEARTSFGRIGVKVWVYKGDITNKDLAREQANQKSSRPERRNDRSDGRTGDRRTNAPRTAPAAEAAPVAAAGVEA.

The 69-residue stretch at 43-111 (IRTMLKTSLD…QIQLNILEVK (69 aa)) folds into the KH type-2 domain. The disordered stretch occupies residues 217–265 (AREQANQKSSRPERRNDRSDGRTGDRRTNAPRTAPAAEAAPVAAAGVEA). Residues 226–244 (SRPERRNDRSDGRTGDRRT) are compositionally biased toward basic and acidic residues. The segment covering 250–265 (APAAEAAPVAAAGVEA) has biased composition (low complexity).

The protein belongs to the universal ribosomal protein uS3 family. In terms of assembly, part of the 30S ribosomal subunit. Forms a tight complex with proteins S10 and S14.

Its function is as follows. Binds the lower part of the 30S subunit head. Binds mRNA in the 70S ribosome, positioning it for translation. This Clavibacter michiganensis subsp. michiganensis (strain NCPPB 382) protein is Small ribosomal subunit protein uS3.